We begin with the raw amino-acid sequence, 256 residues long: Thiazole synthase (256 aa).

The active-site Schiff-base intermediate with DXP is the lysine 97. 1-deoxy-D-xylulose 5-phosphate is bound by residues glycine 158, 184–185 (AG), and 206–207 (NT).

It belongs to the ThiG family. Homotetramer. Forms heterodimers with either ThiH or ThiS.

It is found in the cytoplasm. It carries out the reaction [ThiS sulfur-carrier protein]-C-terminal-Gly-aminoethanethioate + 2-iminoacetate + 1-deoxy-D-xylulose 5-phosphate = [ThiS sulfur-carrier protein]-C-terminal Gly-Gly + 2-[(2R,5Z)-2-carboxy-4-methylthiazol-5(2H)-ylidene]ethyl phosphate + 2 H2O + H(+). The protein operates within cofactor biosynthesis; thiamine diphosphate biosynthesis. Catalyzes the rearrangement of 1-deoxy-D-xylulose 5-phosphate (DXP) to produce the thiazole phosphate moiety of thiamine. Sulfur is provided by the thiocarboxylate moiety of the carrier protein ThiS. In vitro, sulfur can be provided by H(2)S. The chain is Thiazole synthase from Flavobacterium psychrophilum (strain ATCC 49511 / DSM 21280 / CIP 103535 / JIP02/86).